The following is a 33-amino-acid chain: Gastrin (33 aa).

Residue Gln-1 is modified to Pyrrolidone carboxylic acid. Sulfotyrosine is present on Tyr-28. Phe-33 bears the Phenylalanine amide mark.

Belongs to the gastrin/cholecystokinin family. Post-translationally, sulfation enhances proteolytic processing, and blocks peptide degradation. Levels of sulfation differ between proteolytically-cleaved gastrins and between tissues.

It localises to the secreted. Its function is as follows. Gastrin stimulates the stomach mucosa to produce and secrete hydrochloric acid and the pancreas to secrete its digestive enzymes. It also stimulates smooth muscle contraction and increases blood circulation and water secretion in the stomach and intestine. This is Gastrin (GAST) from Macropus giganteus (Eastern gray kangaroo).